Consider the following 356-residue polypeptide: Protein-glutamate methylesterase/protein-glutamine glutaminase 2 (356 aa).

A Response regulatory domain is found at 4–121 (RALVVDDSAL…SQSMPEMAEE (118 aa)). Aspartate 55 is modified (4-aspartylphosphate). A CheB-type methylesterase domain is found at 161-356 (KAAPRNILAI…MAEEIIRIIG (196 aa)). Active-site residues include serine 173, histidine 200, and aspartate 300.

It belongs to the CheB family. In terms of processing, phosphorylated by CheA. Phosphorylation of the N-terminal regulatory domain activates the methylesterase activity.

The protein resides in the cytoplasm. The enzyme catalyses [protein]-L-glutamate 5-O-methyl ester + H2O = L-glutamyl-[protein] + methanol + H(+). It catalyses the reaction L-glutaminyl-[protein] + H2O = L-glutamyl-[protein] + NH4(+). Functionally, involved in chemotaxis. Part of a chemotaxis signal transduction system that modulates chemotaxis in response to various stimuli. Catalyzes the demethylation of specific methylglutamate residues introduced into the chemoreceptors (methyl-accepting chemotaxis proteins or MCP) by CheR. Also mediates the irreversible deamidation of specific glutamine residues to glutamic acid. This chain is Protein-glutamate methylesterase/protein-glutamine glutaminase 2, found in Methanosarcina acetivorans (strain ATCC 35395 / DSM 2834 / JCM 12185 / C2A).